A 102-amino-acid polypeptide reads, in one-letter code: Small ribosomal subunit protein uS10 (102 aa).

It belongs to the universal ribosomal protein uS10 family. Part of the 30S ribosomal subunit.

Functionally, involved in the binding of tRNA to the ribosomes. In Chelativorans sp. (strain BNC1), this protein is Small ribosomal subunit protein uS10.